A 135-amino-acid polypeptide reads, in one-letter code: ATP synthase epsilon chain, chloroplastic (135 aa).

This sequence belongs to the ATPase epsilon chain family. As to quaternary structure, F-type ATPases have 2 components, CF(1) - the catalytic core - and CF(0) - the membrane proton channel. CF(1) has five subunits: alpha(3), beta(3), gamma(1), delta(1), epsilon(1). CF(0) has three main subunits: a, b and c.

It localises to the plastid. Its subcellular location is the chloroplast thylakoid membrane. In terms of biological role, produces ATP from ADP in the presence of a proton gradient across the membrane. This is ATP synthase epsilon chain, chloroplastic from Marchantia polymorpha (Common liverwort).